The following is a 100-amino-acid chain: Ubiquitin-related modifier 1 homolog (100 aa).

Gly-100 carries the post-translational modification 1-thioglycine. A Glycyl lysine isopeptide (Gly-Lys) (interchain with K-? in acceptor proteins) cross-link involves residue Gly-100.

This sequence belongs to the URM1 family. Post-translationally, C-terminal thiocarboxylation occurs in 2 steps, it is first acyl-adenylated (-COAMP) via the hesA/moeB/thiF part of the MOCS3 homolog, then thiocarboxylated (-COSH) via the rhodanese domain of the MOCS3 homolog.

The protein localises to the cytoplasm. The protein operates within tRNA modification; 5-methoxycarbonylmethyl-2-thiouridine-tRNA biosynthesis. Functionally, acts as a sulfur carrier required for 2-thiolation of mcm(5)S(2)U at tRNA wobble positions of cytosolic tRNA(Lys), tRNA(Glu) and tRNA(Gln). Serves as sulfur donor in tRNA 2-thiolation reaction by being thiocarboxylated (-COSH) at its C-terminus by MOCS3. The sulfur is then transferred to tRNA to form 2-thiolation of mcm(5)S(2)U. Also acts as a ubiquitin-like protein (UBL) that is covalently conjugated via an isopeptide bond to lysine residues of target proteins. The thiocarboxylated form serves as substrate for conjugation and oxidative stress specifically induces the formation of UBL-protein conjugates. This chain is Ubiquitin-related modifier 1 homolog, found in Caenorhabditis elegans.